The following is a 21-amino-acid chain: Peptide PGLa-R6 (21 aa).

Position 21 is a leucine amide (Leu-21).

As to expression, expressed by the skin glands.

The protein localises to the secreted. In terms of biological role, antimicrobial peptide. The chain is Peptide PGLa-R6 from Xenopus ruwenzoriensis (Uganda clawed frog).